Reading from the N-terminus, the 165-residue chain is Ribosome maturation factor RimM (165 aa).

The region spanning 90–161 (EDEYFIVDLV…LITIRPSGEW (72 aa)) is the PRC barrel domain.

The protein belongs to the RimM family. As to quaternary structure, binds ribosomal protein uS19.

The protein localises to the cytoplasm. In terms of biological role, an accessory protein needed during the final step in the assembly of 30S ribosomal subunit, possibly for assembly of the head region. Essential for efficient processing of 16S rRNA. May be needed both before and after RbfA during the maturation of 16S rRNA. It has affinity for free ribosomal 30S subunits but not for 70S ribosomes. This chain is Ribosome maturation factor RimM, found in Clostridium perfringens (strain SM101 / Type A).